The sequence spans 226 residues: Pathogenesis-related protein R major form (226 aa).

The first 25 residues, 1–25 (MNFLKSFPFFAFLYFGQYFVAVTHA), serve as a signal peptide directing secretion. 8 disulfides stabilise this stretch: C34–C225, C75–C85, C90–C96, C140–C214, C145–C197, C153–C163, C167–C176, and C177–C184.

The protein belongs to the thaumatin family.

The protein resides in the vacuole. This chain is Pathogenesis-related protein R major form, found in Nicotiana tabacum (Common tobacco).